Here is a 1231-residue protein sequence, read N- to C-terminus: ATP-dependent RNA helicase DHX30 (1231 aa).

Positions 39–65 are disordered; it reads PDGLEGARQEDEEEQPPPPGAEEQSTA. 2 consecutive DRBM domains span residues 80-148 and 292-359; these read PKNL…CQLF and PKNL…CQKL. A Helicase ATP-binding domain is found at 488 to 656; sequence LSAIEQNPVV…FGGCPVVKVP (169 aa). 501-508 serves as a coordination point for ATP; that stretch reads GDTGCGKT. Residues 603-606 carry the DEAH box motif; that stretch reads DEVH. In terms of domain architecture, Helicase C-terminal spans 697–870; it reads LITDLVLQID…NLVVQAKIHM (174 aa).

It belongs to the DEAD box helicase family. DEAH subfamily.

It localises to the cytoplasm. Its subcellular location is the mitochondrion. The protein localises to the mitochondrion matrix. The protein resides in the mitochondrion nucleoid. The enzyme catalyses ATP + H2O = ADP + phosphate + H(+). Functionally, RNA-dependent helicase. Plays an important role in the assembly of the mitochondrial large ribosomal subunit. Required for optimal function of the zinc-finger antiviral protein ZC3HAV1. Associates with mitochondrial DNA. Involved in nervous system development and differentiation through its involvement in the up-regulation of a number of genes which are required for neurogenesis, including GSC, NCAM1, neurogenin, and NEUROD. This chain is ATP-dependent RNA helicase DHX30 (DHX30), found in Gallus gallus (Chicken).